A 382-amino-acid chain; its full sequence is Lipid-A-disaccharide synthase (382 aa).

It belongs to the LpxB family.

It catalyses the reaction 2-N,3-O-bis[(3R)-3-hydroxytetradecanoyl]-alpha-D-glucosaminyl 1-phosphate + UDP-2-N,3-O-bis[(3R)-3-hydroxytetradecanoyl]-alpha-D-glucosamine = lipid A disaccharide (E. coli) + UDP + H(+). The enzyme catalyses a lipid X + a UDP-2-N,3-O-bis[(3R)-3-hydroxyacyl]-alpha-D-glucosamine = a lipid A disaccharide + UDP + H(+). It functions in the pathway glycolipid biosynthesis; lipid IV(A) biosynthesis; lipid IV(A) from (3R)-3-hydroxytetradecanoyl-[acyl-carrier-protein] and UDP-N-acetyl-alpha-D-glucosamine: step 5/6. In terms of biological role, condensation of UDP-2,3-diacylglucosamine and 2,3-diacylglucosamine-1-phosphate to form lipid A disaccharide, a precursor of lipid A, a phosphorylated glycolipid that anchors the lipopolysaccharide to the outer membrane of the cell. This chain is Lipid-A-disaccharide synthase, found in Shigella boydii serotype 18 (strain CDC 3083-94 / BS512).